The following is a 396-amino-acid chain: Putative 2-hydroxyacid dehydrogenase YPL113C (396 aa).

NAD(+) is bound by residues 227-228 (SI), 311-313 (VGR), and D337. R313 is a catalytic residue. E342 is an active-site residue. Residue H361 is the Proton donor of the active site. 361 to 364 (HIGS) contacts NAD(+).

The protein belongs to the D-isomer specific 2-hydroxyacid dehydrogenase family.

Its function is as follows. Putative 2-hydroxyacid dehydrogenase. This chain is Putative 2-hydroxyacid dehydrogenase YPL113C, found in Saccharomyces cerevisiae (strain ATCC 204508 / S288c) (Baker's yeast).